We begin with the raw amino-acid sequence, 547 residues long: Chaperonin GroEL (547 aa).

ATP is bound by residues 29 to 32 (TLGP), 86 to 90 (DGTTT), Gly413, 479 to 481 (NAA), and Asp495.

This sequence belongs to the chaperonin (HSP60) family. As to quaternary structure, forms a cylinder of 14 subunits composed of two heptameric rings stacked back-to-back. Interacts with the co-chaperonin GroES.

It is found in the cytoplasm. It carries out the reaction ATP + H2O + a folded polypeptide = ADP + phosphate + an unfolded polypeptide.. Its function is as follows. Together with its co-chaperonin GroES, plays an essential role in assisting protein folding. The GroEL-GroES system forms a nano-cage that allows encapsulation of the non-native substrate proteins and provides a physical environment optimized to promote and accelerate protein folding. The polypeptide is Chaperonin GroEL (Synechococcus sp. (strain RCC307)).